The chain runs to 816 residues: H(+)/Cl(-) exchange transporter 5 (816 aa).

Over 1 to 124 (MAMWQGAMDN…WALIHSVSDA (124 aa)) the chain is Cytoplasmic. The next 2 helical transmembrane spans lie at 125 to 162 (FSGW…ICTG) and 208 to 231 (VNYF…VKAF). The Selectivity filter part_1 signature appears at 237-241 (GSGIP). Serine 238 contacts chloride. Residues 240–247 (IPEIKTIL) constitute an intramembrane region (helical). 2 helical membrane passes run 256–275 (LGKW…VSSG) and 281–300 (EGPL…HCFN). The Selectivity filter part_2 signature appears at 279 to 283 (GKEGP). Intramembrane regions (helical) lie at residues 312-324 (VLSA…VSVA) and 328-336 (PIGGVLFSL). 5 consecutive transmembrane segments (helical) span residues 348–366 (LWRS…RSIN), 389–414 (LVPF…IAWC), 422–442 (LGKY…ILAF), 498–518 (MWQL…TFGM), and 523–542 (GLFI…LGVG). A Selectivity filter part_3 motif is present at residues 523–527 (GLFIP). Position 525 (phenylalanine 525) interacts with chloride. An intramembrane region (helical) is located at residues 570–584 (GLYAMVGAAACLGGV). Residues 585 to 587 (TRM) constitute an intramembrane region (note=Loop between two helices). The segment at residues 588–599 (TVSLVVIMFELT) is an intramembrane region (helical). Positions 600-604 (GGLEY) form an intramembrane region, note=Loop between two helices. A helical membrane pass occupies residues 605-622 (IVPLMAAAMTSKWVADAL). Over 623–816 (GREGIYDAHI…NQDPESILFN (194 aa)) the chain is Cytoplasmic. Residue tyrosine 628 coordinates chloride. 2 consecutive CBS domains span residues 656–720 (MKPR…ARKK) and 752–811 (ILDL…QDPE). ATP-binding positions include threonine 666, 687–689 (YSG), and 794–797 (TKKD).

This sequence belongs to the chloride channel (TC 2.A.49) family. ClC-5/CLCN5 subfamily. Interacts with NEDD4 and NEDD4L. In terms of processing, ubiquitinated by NEDD4L in the presence of albumin; which promotes endocytosis and proteasomal degradation. In terms of tissue distribution, kidney specific.

Its subcellular location is the golgi apparatus membrane. It localises to the endosome membrane. It is found in the cell membrane. The enzyme catalyses 2 chloride(in) + H(+)(out) = 2 chloride(out) + H(+)(in). Its function is as follows. Proton-coupled chloride transporter. Functions as antiport system and exchanges chloride ions against protons. Important for normal acidification of the endosome lumen. May play an important role in renal tubular function. The CLC channel family contains both chloride channels and proton-coupled anion transporters that exchange chloride or another anion for protons. The absence of conserved gating glutamate residues is typical for family members that function as channels. The chain is H(+)/Cl(-) exchange transporter 5 (Clcn5) from Rattus norvegicus (Rat).